A 213-amino-acid chain; its full sequence is Redox-sensing transcriptional repressor Rex (213 aa).

Residues 16 to 55 (VYSRFLERMDRNGIVTVSSGEIAEGVGVSSAQVRKDLAYF) constitute a DNA-binding region (H-T-H motif). 90–95 (GAGNLG) contributes to the NAD(+) binding site.

The protein belongs to the transcriptional regulatory Rex family. In terms of assembly, homodimer.

It is found in the cytoplasm. Its function is as follows. Modulates transcription in response to changes in cellular NADH/NAD(+) redox state. The polypeptide is Redox-sensing transcriptional repressor Rex (Pelotomaculum thermopropionicum (strain DSM 13744 / JCM 10971 / SI)).